Consider the following 280-residue polypeptide: Borealin (280 aa).

The tract at residues 1 to 58 is required for interaction with INCENP; that stretch reads MAPRKGSSRVAKTNSLRRRKLASFLKDFDREVEIRIKQIESDRQNLLKEVDNLYNIEI. A required for centromere localization region spans residues 1–88; the sequence is MAPRKGSSRV…NKQALEEAAT (88 aa). The interval 1–140 is required for interaction with SENP3; it reads MAPRKGSSRV…ENERKNLQTA (140 aa). The tract at residues 10 to 109 is required to form a minimal CPC core complex that localizes to the central spindle and midbody and properly executes the role of the CPC during cytokinesis; it reads VAKTNSLRRR…TAEAIQTPLK (100 aa). Residues 20–78 are required for interaction with INCENP and BIRC5; sequence KLASFLKDFDREVEIRIKQIESDRQNLLKEVDNLYNIEILRLPKALREMNWLDYFALGG. T88 and T94 each carry phosphothreonine; by TTK. Phosphothreonine is present on T106. S110 carries the post-translational modification Phosphoserine. Residues 130-169 are disordered; the sequence is EENERKNLQTARVKRCPPSKKRTQSIQGKGKGKRSSRANT. K135 is covalently cross-linked (Glycyl lysine isopeptide (Lys-Gly) (interchain with G-Cter in SUMO2)). Residues 141–152 are compositionally biased toward basic residues; it reads RVKRCPPSKKRT. S165 bears the Phosphoserine; by AURKB mark. A Phosphothreonine; by TTK modification is found at T169. Phosphothreonine is present on residues T189 and T204. Phosphoserine occurs at positions 219 and 224. T230 carries the post-translational modification Phosphothreonine; by TTK. Phosphoserine is present on residues S238 and S244.

It belongs to the borealin family. As to quaternary structure, may form homooligomers and homodimers. Component of the chromosomal passenger complex (CPC) composed of at least BIRC5/survivin, CDCA8/borealin, INCENP, AURKB or AURKC; in the complex forms a triple-helix bundle-based subcomplex with INCENP and BIRC5. Interacts with SENP3, UBE2I and RANBP2. Interacts (phosphorylated) with SGO1 and SGO2; the association is dependent on CDK1. In terms of processing, phosphorylated by TTK, essentially at Thr-88, Thr94, Thr-169 and Thr-230. Phosphorylation (probably by CDK1) promotes targeting of the CPC to centromeric DNA. Sumoylated by UBE2I and RANBP2. Desumoylated by SENP3 through the removal of SUMO2 and SUMO3.

The protein resides in the nucleus. The protein localises to the nucleolus. Its subcellular location is the cytoplasm. It localises to the chromosome. It is found in the centromere. The protein resides in the cytoskeleton. The protein localises to the spindle. Its function is as follows. Component of the chromosomal passenger complex (CPC), a complex that acts as a key regulator of mitosis. The CPC complex has essential functions at the centromere in ensuring correct chromosome alignment and segregation and is required for chromatin-induced microtubule stabilization and spindle assembly. In the complex, it may be required to direct the CPC to centromeric DNA. The polypeptide is Borealin (CDCA8) (Pongo abelii (Sumatran orangutan)).